We begin with the raw amino-acid sequence, 158 residues long: Transcription elongation factor GreA (158 aa).

A coiled-coil region spans residues 47–73 (AEYHAAREKQSFIEGRIQELQAKLARA).

This sequence belongs to the GreA/GreB family.

Necessary for efficient RNA polymerase transcription elongation past template-encoded arresting sites. The arresting sites in DNA have the property of trapping a certain fraction of elongating RNA polymerases that pass through, resulting in locked ternary complexes. Cleavage of the nascent transcript by cleavage factors such as GreA or GreB allows the resumption of elongation from the new 3'terminus. GreA releases sequences of 2 to 3 nucleotides. The sequence is that of Transcription elongation factor GreA from Thermodesulfovibrio yellowstonii (strain ATCC 51303 / DSM 11347 / YP87).